We begin with the raw amino-acid sequence, 287 residues long: ATP synthase gamma chain (287 aa).

Belongs to the ATPase gamma chain family. In terms of assembly, F-type ATPases have 2 components, CF(1) - the catalytic core - and CF(0) - the membrane proton channel. CF(1) has five subunits: alpha(3), beta(3), gamma(1), delta(1), epsilon(1). CF(0) has three main subunits: a, b and c.

The protein resides in the cell inner membrane. In terms of biological role, produces ATP from ADP in the presence of a proton gradient across the membrane. The gamma chain is believed to be important in regulating ATPase activity and the flow of protons through the CF(0) complex. This Geobacter sp. (strain M21) protein is ATP synthase gamma chain.